A 235-amino-acid polypeptide reads, in one-letter code: 1-(5-phosphoribosyl)-5-[(5-phosphoribosylamino)methylideneamino] imidazole-4-carboxamide isomerase (235 aa).

The active-site Proton acceptor is aspartate 8. Aspartate 128 (proton donor) is an active-site residue.

Belongs to the HisA/HisF family.

It localises to the cytoplasm. The enzyme catalyses 1-(5-phospho-beta-D-ribosyl)-5-[(5-phospho-beta-D-ribosylamino)methylideneamino]imidazole-4-carboxamide = 5-[(5-phospho-1-deoxy-D-ribulos-1-ylimino)methylamino]-1-(5-phospho-beta-D-ribosyl)imidazole-4-carboxamide. The protein operates within amino-acid biosynthesis; L-histidine biosynthesis; L-histidine from 5-phospho-alpha-D-ribose 1-diphosphate: step 4/9. This chain is 1-(5-phosphoribosyl)-5-[(5-phosphoribosylamino)methylideneamino] imidazole-4-carboxamide isomerase, found in Thermus thermophilus (strain ATCC BAA-163 / DSM 7039 / HB27).